The following is a 487-amino-acid chain: Serralysin (487 aa).

The propeptide occupies 1-16; sequence MQSTKKAIEITESSLA. Zn(2+) is bound at residue His-192. The active site involves Glu-193. Residues His-196, His-202, and Tyr-232 each coordinate Zn(2+). Ca(2+) is bound by residues Arg-269, Gly-271, Thr-273, Asp-301, Gly-303, Gly-304, Asp-306, Thr-343, Glu-345, Gly-350, Gly-352, Asp-354, Asn-359, Ala-361, Asn-363, Gly-367, Gly-368, Ala-369, Gly-370, Asp-372, Gly-376, Gly-377, Gly-378, Gly-379, Asp-381, Gly-385, Gly-386, Ala-387, Gly-388, Asp-390, Asp-399, Asp-406, and Asp-416. Hemolysin-type calcium-binding repeat units lie at residues 348–365 and 366–383; these read IGGSGNDVIVGNAANNVL and KGGAGNDVLFGGGGADEL.

This sequence belongs to the peptidase M10B family. The cofactor is Ca(2+). Requires Zn(2+) as cofactor.

The protein localises to the secreted. The enzyme catalyses Preferential cleavage of bonds with hydrophobic residues in P1'.. Has insecticidal activity against the locust M.palpalis. When administered orally to locusts at a low dose it causes them to lie on their sides exhibiting sporadic limb movements and muscular twitching, followed by full recovery. When administered at higher doses the same symptoms are observed, followed by death. The protein is Serralysin of Serratia marcescens.